A 356-amino-acid chain; its full sequence is Peritrophin-44 (356 aa).

A signal peptide spans 1–23 (MKELQITTGCLLLMVAAIGKTSA). 5 consecutive Chitin-binding type-2 domains span residues 28–85 (SETC…KCIS), 88–146 (KNAC…ECTA), 147–201 (DSIC…PCLA), 220–283 (NFVC…PCTF), and 286–355 (CGNL…YKLC). Residues cysteine 62 and cysteine 75 are joined by a disulfide bond. A glycan (N-linked (GlcNAc...) asparagine) is linked at asparagine 114. Disulfide bonds link cysteine 122–cysteine 135, cysteine 181–cysteine 193, and cysteine 262–cysteine 273. N-linked (GlcNAc...) asparagine glycosylation occurs at asparagine 309.

Glycosylated. As to expression, larval peritrophic membrane.

Functionally, may have roles in the maintenance of peritrophic membrane structure and in the determination of the porosity of the peritrophic membrane. May bind chitin or related oligosaccharide structures. The chain is Peritrophin-44 from Lucilia cuprina (Green bottle fly).